Consider the following 337-residue polypeptide: Pantothenate synthetase (337 aa).

An ATP-binding site is contributed by 31–38; that stretch reads MGALHEGH. Catalysis depends on H38, which acts as the Proton donor. Q65 provides a ligand contact to (R)-pantoate. Beta-alanine is bound at residue Q65. 152–155 is an ATP binding site; the sequence is GQKD. Q158 is a binding site for (R)-pantoate. ATP is bound by residues V181 and 189-192; that span reads LSSR.

Belongs to the pantothenate synthetase family. As to quaternary structure, homodimer.

The protein resides in the cytoplasm. It carries out the reaction (R)-pantoate + beta-alanine + ATP = (R)-pantothenate + AMP + diphosphate + H(+). It functions in the pathway cofactor biosynthesis; (R)-pantothenate biosynthesis; (R)-pantothenate from (R)-pantoate and beta-alanine: step 1/1. Catalyzes the condensation of pantoate with beta-alanine in an ATP-dependent reaction via a pantoyl-adenylate intermediate. The sequence is that of Pantothenate synthetase from Streptomyces coelicolor (strain ATCC BAA-471 / A3(2) / M145).